Consider the following 232-residue polypeptide: Phosphatidylserine decarboxylase proenzyme (232 aa).

The Schiff-base intermediate with substrate; via pyruvic acid role is filled by Ser-190. Ser-190 is subject to Pyruvic acid (Ser); by autocatalysis.

The protein belongs to the phosphatidylserine decarboxylase family. PSD-A subfamily. Heterodimer of a large membrane-associated beta subunit and a small pyruvoyl-containing alpha subunit. Pyruvate serves as cofactor. Post-translationally, is synthesized initially as an inactive proenzyme. Formation of the active enzyme involves a self-maturation process in which the active site pyruvoyl group is generated from an internal serine residue via an autocatalytic post-translational modification. Two non-identical subunits are generated from the proenzyme in this reaction, and the pyruvate is formed at the N-terminus of the alpha chain, which is derived from the carboxyl end of the proenzyme. The post-translation cleavage follows an unusual pathway, termed non-hydrolytic serinolysis, in which the side chain hydroxyl group of the serine supplies its oxygen atom to form the C-terminus of the beta chain, while the remainder of the serine residue undergoes an oxidative deamination to produce ammonia and the pyruvoyl prosthetic group on the alpha chain.

The protein localises to the cell membrane. The catalysed reaction is a 1,2-diacyl-sn-glycero-3-phospho-L-serine + H(+) = a 1,2-diacyl-sn-glycero-3-phosphoethanolamine + CO2. Its pathway is phospholipid metabolism; phosphatidylethanolamine biosynthesis; phosphatidylethanolamine from CDP-diacylglycerol: step 2/2. Functionally, catalyzes the formation of phosphatidylethanolamine (PtdEtn) from phosphatidylserine (PtdSer). The polypeptide is Phosphatidylserine decarboxylase proenzyme (Rhodopseudomonas palustris (strain TIE-1)).